Consider the following 359-residue polypeptide: MNFHQVLFLLLLIFLVDLSDYGVLADKTNDGYKNATKCNIYQGRWIYDNSSNPLYGTSTCPFIGLDCQKFGRPDKNYLHYRWQPTGCDIPRFNGRDFLTRFKGKKILFVGDSLSNNMWVSLSCMLHAAVPNAKYTFQLNKGLSTFTIPEYGISVNFLKNGFLVDLVSDKTRGLILKLDSISRGNQWLGSDVAIFNTFHWWSHTGRAKTWDYFQTGDKIVKEMNRMEAFKIALTTWSKWIDHNIDPSKTRVFYQGVSPVHLNGGEWGKPGKTCLGETVPVQGPSYPGRPNEGEAIVKSVIGRMAKPVELLDVTAMTEMRKDGHPSIYAGGGDRLNDCSHWCLPGVPDAWNQLLYTALLSH.

The chain crosses the membrane as a helical; Signal-anchor for type II membrane protein span at residues 7–25 (LFLLLLIFLVDLSDYGVLA). The GDS motif signature appears at 110 to 112 (GDS). The short motif at 335–349 (DCSHWCLPGVPDAWN) is the DCXHWCLPGXXDXWN motif element.

The protein belongs to the PC-esterase family. TBL subfamily.

The protein resides in the membrane. Its function is as follows. May act as a bridging protein that binds pectin and other cell wall polysaccharides. Probably involved in maintaining esterification of pectins. May be involved in the specific O-acetylation of cell wall polymers. This is Protein trichome birefringence-like 42 (TBL42) from Arabidopsis thaliana (Mouse-ear cress).